We begin with the raw amino-acid sequence, 320 residues long: Cytochrome f (320 aa).

Residues 1–35 (MQTRNNFSWIKEQITRSISVSLMIYIITRASISNA) form the signal peptide. Heme is bound by residues Y36, C56, C59, and H60. Residues 286–306 (VQGLLFFLASVILAQIFLVLK) traverse the membrane as a helical segment.

Belongs to the cytochrome f family. The 4 large subunits of the cytochrome b6-f complex are cytochrome b6, subunit IV (17 kDa polypeptide, petD), cytochrome f and the Rieske protein, while the 4 small subunits are PetG, PetL, PetM and PetN. The complex functions as a dimer. Heme is required as a cofactor.

It is found in the plastid. The protein resides in the chloroplast thylakoid membrane. Component of the cytochrome b6-f complex, which mediates electron transfer between photosystem II (PSII) and photosystem I (PSI), cyclic electron flow around PSI, and state transitions. This chain is Cytochrome f, found in Lactuca sativa (Garden lettuce).